Reading from the N-terminus, the 297-residue chain is Ribosomal RNA small subunit methyltransferase A (297 aa).

Positions 31, 33, 58, 79, 104, and 129 each coordinate S-adenosyl-L-methionine.

The protein belongs to the class I-like SAM-binding methyltransferase superfamily. rRNA adenine N(6)-methyltransferase family. RsmA subfamily.

The protein resides in the cytoplasm. The enzyme catalyses adenosine(1518)/adenosine(1519) in 16S rRNA + 4 S-adenosyl-L-methionine = N(6)-dimethyladenosine(1518)/N(6)-dimethyladenosine(1519) in 16S rRNA + 4 S-adenosyl-L-homocysteine + 4 H(+). In terms of biological role, specifically dimethylates two adjacent adenosines (A1518 and A1519) in the loop of a conserved hairpin near the 3'-end of 16S rRNA in the 30S particle. May play a critical role in biogenesis of 30S subunits. The polypeptide is Ribosomal RNA small subunit methyltransferase A (Pediococcus pentosaceus (strain ATCC 25745 / CCUG 21536 / LMG 10740 / 183-1w)).